A 143-amino-acid chain; its full sequence is Nucleoside diphosphate kinase (143 aa).

6 residues coordinate ATP: Lys11, Phe59, Arg87, Thr93, Arg104, and Asn114. His117 acts as the Pros-phosphohistidine intermediate in catalysis.

Belongs to the NDK family. As to quaternary structure, homotetramer. The cofactor is Mg(2+).

The protein resides in the cytoplasm. It carries out the reaction a 2'-deoxyribonucleoside 5'-diphosphate + ATP = a 2'-deoxyribonucleoside 5'-triphosphate + ADP. The enzyme catalyses a ribonucleoside 5'-diphosphate + ATP = a ribonucleoside 5'-triphosphate + ADP. Major role in the synthesis of nucleoside triphosphates other than ATP. The ATP gamma phosphate is transferred to the NDP beta phosphate via a ping-pong mechanism, using a phosphorylated active-site intermediate. In Idiomarina loihiensis (strain ATCC BAA-735 / DSM 15497 / L2-TR), this protein is Nucleoside diphosphate kinase.